Reading from the N-terminus, the 396-residue chain is L-lactate dehydrogenase (396 aa).

An FMN hydroxy acid dehydrogenase domain is found at 1-380; that stretch reads MIISAASDYR…SGDSLVQELG (380 aa). Substrate is bound at residue tyrosine 24. FMN is bound by residues serine 106 and glutamine 127. Tyrosine 129 serves as a coordination point for substrate. Threonine 155 is an FMN binding site. Residue arginine 164 coordinates substrate. Lysine 251 provides a ligand contact to FMN. The active-site Proton acceptor is the histidine 275. Arginine 278 serves as a coordination point for substrate. Residue 306 to 330 coordinates FMN; it reads DSGIRNGLDVVRMIALGADTVLLGR.

The protein belongs to the FMN-dependent alpha-hydroxy acid dehydrogenase family. FMN is required as a cofactor.

Its subcellular location is the cell inner membrane. The enzyme catalyses (S)-lactate + A = pyruvate + AH2. Catalyzes the conversion of L-lactate to pyruvate. Is coupled to the respiratory chain. The sequence is that of L-lactate dehydrogenase from Salmonella schwarzengrund (strain CVM19633).